We begin with the raw amino-acid sequence, 618 residues long: Indolepyruvate oxidoreductase subunit IorA (618 aa).

4Fe-4S ferredoxin-type domains follow at residues 559-590 (RPVR…DGRV) and 588-617 (GRVF…PEGK). [4Fe-4S] cluster-binding residues include Cys-568, Cys-571, Cys-574, Cys-580, Cys-597, Cys-600, Cys-603, and Cys-607.

In terms of assembly, heterodimer of the IorA and IorB subunits. Requires [4Fe-4S] cluster as cofactor.

It catalyses the reaction indole-3-pyruvate + 2 oxidized [2Fe-2S]-[ferredoxin] + CoA = (indol-3-yl)acetyl-CoA + 2 reduced [2Fe-2S]-[ferredoxin] + CO2 + H(+). Functionally, catalyzes the ferredoxin-dependent oxidative decarboxylation of arylpyruvates. In Methanothermobacter marburgensis (strain ATCC BAA-927 / DSM 2133 / JCM 14651 / NBRC 100331 / OCM 82 / Marburg) (Methanobacterium thermoautotrophicum), this protein is Indolepyruvate oxidoreductase subunit IorA (iorA).